Consider the following 633-residue polypeptide: Extracellular metalloproteinase 5 (633 aa).

Positions 1-21 are cleaved as a signal peptide; that stretch reads MHGLLLAAAGLLSLPLHVIAH. Positions 22–245 are excised as a propeptide; that stretch reads PQPSTNLAGR…HNVVDYVSHA (224 aa). Asn286 carries an N-linked (GlcNAc...) asparagine glycan. Residue His428 coordinates Zn(2+). Residue Glu429 is part of the active site. Position 432 (His432) interacts with Zn(2+). Residues Asn592 and Asn621 are each glycosylated (N-linked (GlcNAc...) asparagine).

This sequence belongs to the peptidase M36 family. Requires Zn(2+) as cofactor.

The protein resides in the secreted. In terms of biological role, secreted metalloproteinase probably acting as a virulence factor. This Arthroderma benhamiae (Trichophyton mentagrophytes) protein is Extracellular metalloproteinase 5 (MEP5).